The following is a 664-amino-acid chain: Macoilin-1 (664 aa).

4 helical membrane-spanning segments follow: residues Thr-28–Leu-48, Ala-75–Ile-95, Val-120–Phe-140, and Phe-154–Val-174. Positions Gln-206–Glu-225 are disordered. Positions Arg-210–Thr-219 are enriched in basic and acidic residues. 5 N-linked (GlcNAc...) asparagine glycosylation sites follow: Asn-234, Asn-336, Asn-339, Asn-348, and Asn-655. 2 disordered regions span residues Val-315–His-364 and Phe-644–Lys-664. Over residues Ser-334–Asn-348 the composition is skewed to low complexity. Polar residues predominate over residues Phe-644–Val-658.

The protein belongs to the macoilin family.

Its subcellular location is the nucleus membrane. It is found in the rough endoplasmic reticulum membrane. Functionally, may play a role in the regulation of neuronal activity. The sequence is that of Macoilin-1 from Danio rerio (Zebrafish).